The chain runs to 54 residues: uncharacterized protein (54 aa).

Positions 1–38 (MFPNSNGPNKMKALVAPSNSSTTSKTNNNNLPPNGRSS) are disordered. Over residues 17–38 (PSNSSTTSKTNNNNLPPNGRSS) the composition is skewed to low complexity.

This is an uncharacterized protein from Dictyostelium discoideum (Social amoeba).